Here is a 383-residue protein sequence, read N- to C-terminus: BRISC and BRCA1-A complex member 2 (383 aa).

Position 1 is an N-acetylmethionine (M1). S2 carries the phosphoserine modification. UEV-like stretches follow at residues 30 to 147 (DATN…TLLE) and 275 to 364 (IAAF…RAKA).

It belongs to the BABAM2 family. As to quaternary structure, component of the ARISC complex, at least composed of UIMC1/RAP80, ABRAXAS1, BRCC3/BRCC36, BABAM2 and BABAM1/NBA1. Component of the BRCA1-A complex, at least composed of BRCA1, BARD1, UIMC1/RAP80, ABRAXAS1, BRCC3/BRCC36, BABAM2 and BABAM1/NBA1. In the BRCA1-A complex, interacts directly with ABRAXAS1, BRCC3/BRCC36 and BABAM1/NBA1. Binds polyubiquitin. Component of the BRISC complex, at least composed of ABRAXAS2, BRCC3/BRCC36, BABAM2 and BABAM1/NBA1. Identified in a complex with SHMT2 and the other subunits of the BRISC complex. Component of the BRCA1/BRCA2 containing complex (BRCC), which also contains BRCA1, BRCA2, BARD1, BRCC3/BRCC36 and RAD51. BRCC is a ubiquitin E3 ligase complex that enhances cellular survival following DNA damage. May interact with FAS and TNFRSF1A.

It localises to the cytoplasm. The protein resides in the nucleus. Functionally, component of the BRCA1-A complex, a complex that specifically recognizes 'Lys-63'-linked ubiquitinated histones H2A and H2AX at DNA lesions sites, leading to target the BRCA1-BARD1 heterodimer to sites of DNA damage at double-strand breaks (DSBs). The BRCA1-A complex also possesses deubiquitinase activity that specifically removes 'Lys-63'-linked ubiquitin on histones H2A and H2AX. In the BRCA1-A complex, it acts as an adapter that bridges the interaction between BABAM1/NBA1 and the rest of the complex, thereby being required for the complex integrity and modulating the E3 ubiquitin ligase activity of the BRCA1-BARD1 heterodimer. Component of the BRISC complex, a multiprotein complex that specifically cleaves 'Lys-63'-linked ubiquitin in various substrates. Within the BRISC complex, acts as an adapter that bridges the interaction between BABAM1/NBA1 and the rest of the complex, thereby being required for the complex integrity. The BRISC complex is required for normal mitotic spindle assembly and microtubule attachment to kinetochores via its role in deubiquitinating NUMA1. The BRISC complex plays a role in interferon signaling via its role in the deubiquitination of the interferon receptor IFNAR1; deubiquitination increases IFNAR1 activity by enhancing its stability and cell surface expression. Down-regulates the response to bacterial lipopolysaccharide (LPS) via its role in IFNAR1 deubiquitination. May play a role in homeostasis or cellular differentiation in cells of neural, epithelial and germline origins. May also act as a death receptor-associated anti-apoptotic protein, which inhibits the mitochondrial apoptotic pathway. May regulate TNF-alpha signaling through its interactions with TNFRSF1A; however these effects may be indirect. The protein is BRISC and BRCA1-A complex member 2 of Rattus norvegicus (Rat).